A 346-amino-acid chain; its full sequence is N-acetyl-gamma-glutamyl-phosphate reductase (346 aa).

The active site involves C151.

This sequence belongs to the NAGSA dehydrogenase family. Type 1 subfamily.

Its subcellular location is the cytoplasm. It carries out the reaction N-acetyl-L-glutamate 5-semialdehyde + phosphate + NADP(+) = N-acetyl-L-glutamyl 5-phosphate + NADPH + H(+). Its pathway is amino-acid biosynthesis; L-arginine biosynthesis; N(2)-acetyl-L-ornithine from L-glutamate: step 3/4. Its function is as follows. Catalyzes the NADPH-dependent reduction of N-acetyl-5-glutamyl phosphate to yield N-acetyl-L-glutamate 5-semialdehyde. The polypeptide is N-acetyl-gamma-glutamyl-phosphate reductase (Ehrlichia canis (strain Jake)).